A 103-amino-acid chain; its full sequence is uncharacterized protein (103 aa).

An N-terminal signal peptide occupies residues 1 to 22; sequence MFRPFLNSLMLGSLFFPFIAIA.

To the N-terminal of the FimA/PapA family of fimbria proteins.

This is an uncharacterized protein from Escherichia coli (strain K12).